The following is a 156-amino-acid chain: Small ribosomal subunit protein uS7 (156 aa).

It belongs to the universal ribosomal protein uS7 family. As to quaternary structure, part of the 30S ribosomal subunit. Contacts proteins S9 and S11.

One of the primary rRNA binding proteins, it binds directly to 16S rRNA where it nucleates assembly of the head domain of the 30S subunit. Is located at the subunit interface close to the decoding center, probably blocks exit of the E-site tRNA. The chain is Small ribosomal subunit protein uS7 from Solibacter usitatus (strain Ellin6076).